A 406-amino-acid polypeptide reads, in one-letter code: Argininosuccinate synthase (406 aa).

Residues 13 to 21 (AYSGGLDTS) and Ala-40 contribute to the ATP site. Tyr-91 and Ser-96 together coordinate L-citrulline. Residue Gly-121 participates in ATP binding. Residues Thr-123, Asn-127, and Asp-128 each contribute to the L-aspartate site. L-citrulline is bound at residue Asn-127. Residues Arg-131, Ser-182, Ser-191, Glu-267, and Tyr-279 each coordinate L-citrulline.

This sequence belongs to the argininosuccinate synthase family. Type 1 subfamily. In terms of assembly, homotetramer.

The protein resides in the cytoplasm. The catalysed reaction is L-citrulline + L-aspartate + ATP = 2-(N(omega)-L-arginino)succinate + AMP + diphosphate + H(+). The protein operates within amino-acid biosynthesis; L-arginine biosynthesis; L-arginine from L-ornithine and carbamoyl phosphate: step 2/3. This chain is Argininosuccinate synthase, found in Brucella anthropi (strain ATCC 49188 / DSM 6882 / CCUG 24695 / JCM 21032 / LMG 3331 / NBRC 15819 / NCTC 12168 / Alc 37) (Ochrobactrum anthropi).